A 528-amino-acid chain; its full sequence is Putative ABC transporter ATP-binding protein MA_1418 (528 aa).

ABC transporter domains follow at residues 2–242 (IELR…TNLT) and 262–494 (ISVK…SDYK). Residues 36 to 43 (GHSAAGKT) and 294 to 301 (GENGSGKT) contribute to the ATP site.

Belongs to the ABC transporter superfamily.

Its subcellular location is the cell membrane. Probably part of an ABC transporter complex. Responsible for energy coupling to the transport system. The sequence is that of Putative ABC transporter ATP-binding protein MA_1418 from Methanosarcina acetivorans (strain ATCC 35395 / DSM 2834 / JCM 12185 / C2A).